The chain runs to 441 residues: Thymidine phosphorylase (441 aa).

This sequence belongs to the thymidine/pyrimidine-nucleoside phosphorylase family. As to quaternary structure, homodimer.

The catalysed reaction is thymidine + phosphate = 2-deoxy-alpha-D-ribose 1-phosphate + thymine. It participates in pyrimidine metabolism; dTMP biosynthesis via salvage pathway; dTMP from thymine: step 1/2. In terms of biological role, the enzymes which catalyze the reversible phosphorolysis of pyrimidine nucleosides are involved in the degradation of these compounds and in their utilization as carbon and energy sources, or in the rescue of pyrimidine bases for nucleotide synthesis. The protein is Thymidine phosphorylase of Chromobacterium violaceum (strain ATCC 12472 / DSM 30191 / JCM 1249 / CCUG 213 / NBRC 12614 / NCIMB 9131 / NCTC 9757 / MK).